We begin with the raw amino-acid sequence, 105 residues long: Met repressor (105 aa).

Belongs to the MetJ family. As to quaternary structure, homodimer.

It localises to the cytoplasm. Its function is as follows. This regulatory protein, when combined with SAM (S-adenosylmethionine) represses the expression of the methionine regulon and of enzymes involved in SAM synthesis. The protein is Met repressor of Sodalis glossinidius (strain morsitans).